The chain runs to 551 residues: Chitinase (551 aa).

A signal peptide spans 1–17; that stretch reads MLYKLLNVLWLVAVSNA. Residues 1–149 form a chitin binding domain (CBD) region; it reads MLYKLLNVLW…NKPGRREDKI (149 aa). The region spanning 148 to 548 is the GH18 domain; it reads KIVAAYFVEW…NAINAQFKPK (401 aa). A glycan (N-linked (GlcNAc...) asparagine; by host) is linked at Asn173. Glu305 functions as the Proton donor in the catalytic mechanism. N-linked (GlcNAc...) asparagine; by host glycosylation is present at Asn444. Positions 548-551 match the Prevents secretion from ER motif; that stretch reads KDEL.

It belongs to the glycosyl hydrolase 18 family. Chitinase class II subfamily. Interacts with host VCATH.

Its subcellular location is the host endoplasmic reticulum lumen. The enzyme catalyses Random endo-hydrolysis of N-acetyl-beta-D-glucosaminide (1-&gt;4)-beta-linkages in chitin and chitodextrins.. In terms of biological role, plays a role in host liquefaction to facilitate horizontal transmission of the virus by hydrolyzing beta-chitin and by regulating the cysteine protease VCATH. Localized in the host reticulum endoplasmic via its KDEL motif, interacts with and thus prevents VCATH secretion before host cell lysis occurs. This is Chitinase (CHIA) from Lepidoptera (butterflies and moths).